Reading from the N-terminus, the 346-residue chain is D-erythrose-4-phosphate dehydrogenase (346 aa).

11 to 12 (RI) provides a ligand contact to NAD(+). Substrate is bound by residues 163–165 (SCT), Arg209, 222–223 (TK), and Arg245. Cys164 acts as the Nucleophile in catalysis. Asn327 lines the NAD(+) pocket.

The protein belongs to the glyceraldehyde-3-phosphate dehydrogenase family. Epd subfamily. Homotetramer.

The protein localises to the cytoplasm. The enzyme catalyses D-erythrose 4-phosphate + NAD(+) + H2O = 4-phospho-D-erythronate + NADH + 2 H(+). The protein operates within cofactor biosynthesis; pyridoxine 5'-phosphate biosynthesis; pyridoxine 5'-phosphate from D-erythrose 4-phosphate: step 1/5. Its function is as follows. Catalyzes the NAD-dependent conversion of D-erythrose 4-phosphate to 4-phosphoerythronate. This Vibrio vulnificus (strain CMCP6) protein is D-erythrose-4-phosphate dehydrogenase.